The primary structure comprises 622 residues: Intermediate filament protein ifc-2 (622 aa).

The head stretch occupies residues 19–54; sequence SGTYASGFGQLVSGMSSAGAICTTQIRDAREREKRE. Residues 51-399 enclose the IF rod domain; the sequence is EKREIGLLND…ILLNGANVTT (349 aa). Positions 55-86 are coil 1A; that stretch reads IGLLNDRLADYIEKVRFLEAQNRCLSHDIDIL. Positions 87–99 are linker 1; the sequence is RNGFSGGGHVSGL. The interval 100-237 is coil 1B; it reads FDAEINQAKH…TENNVRIEQE (138 aa). Residues 238–255 form a linker 12 region; it reads LVFIRRDTTADNRDYFRH. The segment at 256 to 399 is coil 2; the sequence is ELQAAIRDIR…ILLNGANVTT (144 aa). The segment at 400 to 550 is tail; sequence YTSNTHGSGS…RVDVGGFRIE (151 aa). One can recognise an LTD domain in the interval 509-622; sequence SGRHFHSWYL…EERAWFVYLD (114 aa).

It belongs to the intermediate filament family. As to expression, expressed in intestinal cells and at desmosomes in intestine and pharynx of the larva.

The protein localises to the cytoplasm. Functionally, cytoplasmic intermediate filaments provide mechanical strength to cells. Not essential protein, although its absence leads to mild defects in locomotion. The chain is Intermediate filament protein ifc-2 (ifc-2) from Caenorhabditis elegans.